The primary structure comprises 149 residues: UPF0756 membrane protein Nther_1957 (149 aa).

Helical transmembrane passes span 5 to 25 (IVVLLFIFLIALIGKNDLVAT), 52 to 72 (LGILLLTLSVLTPFAAGDIMP), 85 to 105 (LIAVFSGIVASYLTGHGVELL), and 111 to 131 (VMVGLIVGSIIGASFLKGVPA).

Belongs to the UPF0756 family.

It is found in the cell membrane. The sequence is that of UPF0756 membrane protein Nther_1957 from Natranaerobius thermophilus (strain ATCC BAA-1301 / DSM 18059 / JW/NM-WN-LF).